Here is a 209-residue protein sequence, read N- to C-terminus: tRNA(Phe) 7-((3-amino-3-carboxypropyl)-4-demethylwyosine(37)-N(4))-methyltransferase (209 aa).

It belongs to the TYW3 family.

The enzyme catalyses 4-demethyl-7-[(3S)-3-amino-3-carboxypropyl]wyosine(37) in tRNA(Phe) + S-adenosyl-L-methionine = 7-[(3S)-3-amino-3-carboxypropyl]wyosine(37) in tRNA(Phe) + S-adenosyl-L-homocysteine + H(+). In terms of biological role, S-adenosyl-L-methionine-dependent methyltransferase that acts as a component of the wyosine derivatives biosynthesis pathway. Probably methylates N-4 position of wybutosine-86 to produce wybutosine-72. This Saccharolobus solfataricus (strain ATCC 35092 / DSM 1617 / JCM 11322 / P2) (Sulfolobus solfataricus) protein is tRNA(Phe) 7-((3-amino-3-carboxypropyl)-4-demethylwyosine(37)-N(4))-methyltransferase.